The primary structure comprises 137 residues: BolA-like protein 1 (137 aa).

Serine 81 bears the Phosphoserine mark. The segment at 115–137 is disordered; it reads RENPQLDISPPCLGGSKKTRGTS.

It belongs to the BolA/IbaG family. As to quaternary structure, interacts with GLRX5.

The protein resides in the mitochondrion. In terms of biological role, acts as a mitochondrial iron-sulfur (Fe-S) cluster assembly factor that facilitates (Fe-S) cluster insertion into a subset of mitochondrial proteins. Probably acts together with the monothiol glutaredoxin GLRX5. May protect cells against oxidative stress. The sequence is that of BolA-like protein 1 (Bola1) from Mus musculus (Mouse).